The following is a 906-amino-acid chain: Cadherin-2 (906 aa).

A signal peptide spans 1 to 25 (MCRIVGAPRTLLPLLAALLQASVEA). Positions 26–159 (SGGIALCKTG…HNGHLQRQKR (134 aa)) are excised as a propeptide. Phosphoserine occurs at positions 96 and 135. Cadherin domains are found at residues 160–267 (DWVI…RPEF), 268–382 (LHQV…PPEF), 383–497 (TAMS…NPYF), 498–603 (APNP…DNAP), and 604–714 (QVVP…DVDR). Topologically, residues 160–724 (DWVIPPINLP…IVGAGLGTGA (565 aa)) are extracellular. A Ca(2+)-binding site is contributed by glutamate 170. The N-linked (GlcNAc...) asparagine glycan is linked to asparagine 190. Ca(2+) is bound by residues aspartate 226, glutamate 228, aspartate 259, methionine 260, asparagine 261, aspartate 262, and asparagine 263. Asparagine 273 carries N-linked (GlcNAc...) asparagine glycosylation. Positions 293, 295, and 301 each coordinate Ca(2+). The N-linked (GlcNAc...) asparagine glycan is linked to asparagine 325. Ca(2+) is bound at residue aspartate 353. Asparagine 402, asparagine 572, asparagine 622, asparagine 651, and asparagine 692 each carry an N-linked (GlcNAc...) asparagine glycan. A helical transmembrane segment spans residues 725–745 (IIAILLCIIILLILVLMFVVW). Over 746–906 (MKRRDKERQA…LADMYGGGDD (161 aa)) the chain is Cytoplasmic. Low complexity predominate over residues 863 to 880 (SGSTAGSLSSLNSSSSGG). The disordered stretch occupies residues 863–884 (SGSTAGSLSSLNSSSSGGEQDY).

As to quaternary structure, homodimer (via extracellular region). Can also form heterodimers with other cadherins (via extracellular region). Dimerization occurs in trans, i.e. with a cadherin chain from another cell. Interacts with CDCP1. Interacts with PCDH8; this complex may also include TAOK2. The interaction with PCDH8 may lead to internalization through TAOK2/p38 MAPK pathway. Identified in a complex containing FGFR4, NCAM1, CDH2, PLCG1, FRS2, SRC, SHC1, GAP43 and CTTN. May interact with OBSCN (via protein kinase domain 2). Interacts with FBXO45. Cleaved by MMP24. Ectodomain cleavage leads to the generation of a soluble 90 kDa N-terminal soluble fragment and a 45 kDa membrane-bound C-terminal fragment 1 (CTF1), which is further cleaved by gamma-secretase into a 35 kDa. Cleavage in neural stem cells by MMP24 affects CDH2-mediated anchorage of neural stem cells to ependymocytes in the adult subependymal zone, leading to modulate neural stem cell quiescence. In terms of processing, may be phosphorylated by OBSCN.

The protein localises to the cell membrane. It is found in the sarcolemma. The protein resides in the cell junction. It localises to the cell surface. Its subcellular location is the desmosome. The protein localises to the adherens junction. In terms of biological role, calcium-dependent cell adhesion protein; preferentially mediates homotypic cell-cell adhesion by dimerization with a CDH2 chain from another cell. Cadherins may thus contribute to the sorting of heterogeneous cell types. Acts as a regulator of neural stem cells quiescence by mediating anchorage of neural stem cells to ependymocytes in the adult subependymal zone: upon cleavage by MMP24, CDH2-mediated anchorage is affected, leading to modulate neural stem cell quiescence. Plays a role in cell-to-cell junction formation between pancreatic beta cells and neural crest stem (NCS) cells, promoting the formation of processes by NCS cells. CDH2 may be involved in neuronal recognition mechanism. In hippocampal neurons, may regulate dendritic spine density. This Rhinolophus ferrumequinum (Greater horseshoe bat) protein is Cadherin-2 (CDH2).